Here is a 22-residue protein sequence, read N- to C-terminus: Putative lactoylglutathione lyase (22 aa).

The interval 1-22 (ITACLDPDGWKEPGPLPGISTK) is disordered. Residue Glu12 is the Proton donor/acceptor of the active site.

This sequence belongs to the glyoxalase I family. Requires Zn(2+) as cofactor.

The catalysed reaction is (R)-S-lactoylglutathione = methylglyoxal + glutathione. The protein operates within secondary metabolite metabolism; methylglyoxal degradation; (R)-lactate from methylglyoxal: step 1/2. Catalyzes the conversion of hemimercaptal, formed from methylglyoxal and glutathione, to S-lactoylglutathione. The sequence is that of Putative lactoylglutathione lyase from Pinus strobus (Eastern white pine).